Reading from the N-terminus, the 289-residue chain is ATP synthase gamma chain (289 aa).

Belongs to the ATPase gamma chain family. F-type ATPases have 2 components, CF(1) - the catalytic core - and CF(0) - the membrane proton channel. CF(1) has five subunits: alpha(3), beta(3), gamma(1), delta(1), epsilon(1). CF(0) has three main subunits: a, b and c.

Its subcellular location is the cell inner membrane. Produces ATP from ADP in the presence of a proton gradient across the membrane. The gamma chain is believed to be important in regulating ATPase activity and the flow of protons through the CF(0) complex. The sequence is that of ATP synthase gamma chain from Anaeromyxobacter dehalogenans (strain 2CP-C).